A 213-amino-acid chain; its full sequence is Chloramphenicol acetyltransferase 2 (213 aa).

The active-site Proton acceptor is the H189.

This sequence belongs to the chloramphenicol acetyltransferase family. As to quaternary structure, homotrimer.

It carries out the reaction chloramphenicol + acetyl-CoA = chloramphenicol 3-acetate + CoA. Its function is as follows. This enzyme is an effector of chloramphenicol resistance in bacteria. The chain is Chloramphenicol acetyltransferase 2 (cmlA) from Escherichia coli.